Consider the following 369-residue polypeptide: Ubiquinone biosynthesis protein COQ4, mitochondrial (369 aa).

Residues 1 to 35 constitute a mitochondrion transit peptide; the sequence is MLTSQKVSRVLLHSSFLKTPVSTQSRSFVFTTIAT. Zn(2+) contacts are provided by H212, D213, H216, and E228. Residues 329 to 360 show a composition bias toward low complexity; it reads AAAAATVTQRQRQQQRATATAANATSASSANV. A disordered region spans residues 329–369; the sequence is AAAAATVTQRQRQQQRATATAANATSASSANVKPSNTAGAM.

Belongs to the COQ4 family. Component of a multi-subunit COQ enzyme complex, composed of at least COQ3, COQ4, COQ5, COQ6, COQ7 and COQ9. It depends on Zn(2+) as a cofactor.

It is found in the mitochondrion inner membrane. The catalysed reaction is a 4-hydroxy-3-methoxy-5-(all-trans-polyprenyl)benzoate + H(+) = a 2-methoxy-6-(all-trans-polyprenyl)phenol + CO2. It participates in cofactor biosynthesis; ubiquinone biosynthesis. Functionally, lyase that catalyzes the C1-decarboxylation of 4-hydroxy-3-methoxy-5-(all-trans-polyprenyl)benzoic acid into 2-methoxy-6-(all-trans-polyprenyl)phenol during ubiquinone biosynthesis. This is Ubiquinone biosynthesis protein COQ4, mitochondrial from Lodderomyces elongisporus (strain ATCC 11503 / CBS 2605 / JCM 1781 / NBRC 1676 / NRRL YB-4239) (Yeast).